The sequence spans 373 residues: 4-hydroxy-3-methylbut-2-en-1-yl diphosphate synthase (flavodoxin) (373 aa).

Positions 270, 273, 305, and 312 each coordinate [4Fe-4S] cluster.

This sequence belongs to the IspG family. It depends on [4Fe-4S] cluster as a cofactor.

It carries out the reaction (2E)-4-hydroxy-3-methylbut-2-enyl diphosphate + oxidized [flavodoxin] + H2O + 2 H(+) = 2-C-methyl-D-erythritol 2,4-cyclic diphosphate + reduced [flavodoxin]. It participates in isoprenoid biosynthesis; isopentenyl diphosphate biosynthesis via DXP pathway; isopentenyl diphosphate from 1-deoxy-D-xylulose 5-phosphate: step 5/6. Its function is as follows. Converts 2C-methyl-D-erythritol 2,4-cyclodiphosphate (ME-2,4cPP) into 1-hydroxy-2-methyl-2-(E)-butenyl 4-diphosphate. The chain is 4-hydroxy-3-methylbut-2-en-1-yl diphosphate synthase (flavodoxin) from Klebsiella pneumoniae (strain 342).